The chain runs to 88 residues: Large ribosomal subunit protein bL27 (88 aa).

This sequence belongs to the bacterial ribosomal protein bL27 family.

This chain is Large ribosomal subunit protein bL27, found in Mycobacterium leprae (strain TN).